The chain runs to 285 residues: MLVEALPYIRKFEGKTFVIKYGGAAMKDEVLKNIFAENVTLLRKVGIKVVIVHGGGDAITKTSAKLGLETTFVHGKRVTDRQTVDVIQMTLAGKVNQDIVQLINKDGGNAVGVSGLDADTILAKPSPNASTLGLVGEVAEINTRYIDLLCDAGLIPVIAPIGYDMEGNIYNINADDAAAAIAVALKAEKLIYVSDVEGVRVGNRILKTICKADAAELIEKGIITGGMIPKVVSAYQTLDGGVGKVHLIDGQITHSLLLEVFTNEGVGTQFVNELEQEPTAEEGAS.

Substrate contacts are provided by residues 55–56 (GG), arginine 77, and asparagine 171.

The protein belongs to the acetylglutamate kinase family. ArgB subfamily.

It localises to the cytoplasm. It carries out the reaction N-acetyl-L-glutamate + ATP = N-acetyl-L-glutamyl 5-phosphate + ADP. It functions in the pathway amino-acid biosynthesis; L-arginine biosynthesis; N(2)-acetyl-L-ornithine from L-glutamate: step 2/4. Functionally, catalyzes the ATP-dependent phosphorylation of N-acetyl-L-glutamate. The sequence is that of Acetylglutamate kinase from Chlorobaculum tepidum (strain ATCC 49652 / DSM 12025 / NBRC 103806 / TLS) (Chlorobium tepidum).